Consider the following 269-residue polypeptide: Zinc transporter ZupT (269 aa).

The next 8 helical transmembrane spans lie at 11–31 (IALA…LLVL), 40–60 (LLAF…LSEI), 80–100 (YGTL…HFIP), 125–145 (ALLT…ATFF), 158–178 (AFAI…PVYF), 187–207 (FSAS…GYWL), 217–237 (FGWV…DELL), and 249–269 (TVYG…LFKW). Fe(2+)-binding residues include asparagine 136 and glutamate 139. Zn(2+) is bound by residues glutamate 139 and histidine 164. Fe(2+)-binding residues include asparagine 165, glutamate 168, and glutamate 197. A Zn(2+)-binding site is contributed by glutamate 168.

The protein belongs to the ZIP transporter (TC 2.A.5) family. ZupT subfamily.

It is found in the cell inner membrane. It carries out the reaction Zn(2+)(in) = Zn(2+)(out). Mediates zinc uptake. May also transport other divalent cations. The polypeptide is Zinc transporter ZupT (Stenotrophomonas maltophilia (strain K279a)).